Consider the following 492-residue polypeptide: Ketol-acid reductoisomerase (NADP(+)) (492 aa).

The KARI N-terminal Rossmann domain occupies 14-208; it reads LDQLGRCRFM…GGHKAGVLES (195 aa). NADP(+) is bound by residues 45 to 48, Arg68, Arg76, Ser78, and 108 to 110; these read CGAQ and DKQ. His132 is an active-site residue. Position 158 (Gly158) interacts with NADP(+). 2 KARI C-terminal knotted domains span residues 209–344 and 345–485; these read SFVA…NAPK and YDGK…MTDM. Mg(2+)-binding residues include Asp217, Glu221, Glu389, and Glu393. Ser414 is a substrate binding site.

The protein belongs to the ketol-acid reductoisomerase family. Mg(2+) serves as cofactor.

The catalysed reaction is (2R)-2,3-dihydroxy-3-methylbutanoate + NADP(+) = (2S)-2-acetolactate + NADPH + H(+). The enzyme catalyses (2R,3R)-2,3-dihydroxy-3-methylpentanoate + NADP(+) = (S)-2-ethyl-2-hydroxy-3-oxobutanoate + NADPH + H(+). The protein operates within amino-acid biosynthesis; L-isoleucine biosynthesis; L-isoleucine from 2-oxobutanoate: step 2/4. It participates in amino-acid biosynthesis; L-valine biosynthesis; L-valine from pyruvate: step 2/4. Its function is as follows. Involved in the biosynthesis of branched-chain amino acids (BCAA). Catalyzes an alkyl-migration followed by a ketol-acid reduction of (S)-2-acetolactate (S2AL) to yield (R)-2,3-dihydroxy-isovalerate. In the isomerase reaction, S2AL is rearranged via a Mg-dependent methyl migration to produce 3-hydroxy-3-methyl-2-ketobutyrate (HMKB). In the reductase reaction, this 2-ketoacid undergoes a metal-dependent reduction by NADPH to yield (R)-2,3-dihydroxy-isovalerate. In Haemophilus influenzae (strain PittEE), this protein is Ketol-acid reductoisomerase (NADP(+)).